The primary structure comprises 199 residues: Putative pseudouridine methyltransferase (199 aa).

S-adenosyl-L-methionine contacts are provided by leucine 132 and cysteine 186.

Belongs to the methyltransferase superfamily. TrmY family.

The protein localises to the cytoplasm. This chain is Putative pseudouridine methyltransferase, found in Vibrio parahaemolyticus serotype O3:K6 (strain RIMD 2210633).